The sequence spans 232 residues: 5'-methylthioadenosine/S-adenosylhomocysteine nucleosidase (232 aa).

Catalysis depends on Glu-14, which acts as the Proton acceptor. Residues Gly-80, Val-154, and 175–176 contribute to the substrate site; that span reads ME. Asp-199 (proton donor) is an active-site residue.

Belongs to the PNP/UDP phosphorylase family. MtnN subfamily.

It catalyses the reaction S-adenosyl-L-homocysteine + H2O = S-(5-deoxy-D-ribos-5-yl)-L-homocysteine + adenine. The catalysed reaction is S-methyl-5'-thioadenosine + H2O = 5-(methylsulfanyl)-D-ribose + adenine. It carries out the reaction 5'-deoxyadenosine + H2O = 5-deoxy-D-ribose + adenine. Its pathway is amino-acid biosynthesis; L-methionine biosynthesis via salvage pathway; S-methyl-5-thio-alpha-D-ribose 1-phosphate from S-methyl-5'-thioadenosine (hydrolase route): step 1/2. Catalyzes the irreversible cleavage of the glycosidic bond in both 5'-methylthioadenosine (MTA) and S-adenosylhomocysteine (SAH/AdoHcy) to adenine and the corresponding thioribose, 5'-methylthioribose and S-ribosylhomocysteine, respectively. Also cleaves 5'-deoxyadenosine, a toxic by-product of radical S-adenosylmethionine (SAM) enzymes, into 5-deoxyribose and adenine. This Actinobacillus pleuropneumoniae serotype 3 (strain JL03) protein is 5'-methylthioadenosine/S-adenosylhomocysteine nucleosidase.